A 351-amino-acid polypeptide reads, in one-letter code: Protein MGF 360-2L (351 aa).

This sequence belongs to the asfivirus MGF 360 family.

Its function is as follows. Plays a role in virus cell tropism, and may be required for efficient virus replication in macrophages. The chain is Protein MGF 360-2L from African swine fever virus (isolate Tick/South Africa/Pretoriuskop Pr4/1996) (ASFV).